A 67-amino-acid polypeptide reads, in one-letter code: Probable Sec-independent protein translocase protein TatE (67 aa).

Residues 1–21 (MGEISITKLLVVAALVVLLFG) form a helical membrane-spanning segment. Positions 45–67 (DEDAGAKKDANGDLPAEKLTHKE) are disordered.

The protein belongs to the TatA/E family. TatE subfamily.

Its subcellular location is the cell inner membrane. Functionally, part of the twin-arginine translocation (Tat) system that transports large folded proteins containing a characteristic twin-arginine motif in their signal peptide across membranes. TatE shares overlapping functions with TatA. The protein is Probable Sec-independent protein translocase protein TatE of Escherichia fergusonii (strain ATCC 35469 / DSM 13698 / CCUG 18766 / IAM 14443 / JCM 21226 / LMG 7866 / NBRC 102419 / NCTC 12128 / CDC 0568-73).